The primary structure comprises 249 residues: Adapter protein MecA (249 aa).

Belongs to the MecA family. In terms of assembly, homodimer.

Functionally, enables the recognition and targeting of unfolded and aggregated proteins to the ClpC protease or to other proteins involved in proteolysis. In Streptococcus thermophilus (strain ATCC BAA-250 / LMG 18311), this protein is Adapter protein MecA.